Here is a 330-residue protein sequence, read N- to C-terminus: Major ferric iron-binding protein (330 aa).

A signal peptide spans 1 to 22; it reads MKTSIRYALLAAALTAATPALA. Residues His31, Glu79, Tyr217, and Tyr218 each coordinate Fe cation.

This sequence belongs to the bacterial solute-binding protein 1 family.

The protein localises to the periplasm. Its function is as follows. This protein may be a central component in the iron-acquisition system. This Neisseria gonorrhoeae protein is Major ferric iron-binding protein (fbp).